Consider the following 197-residue polypeptide: MNSPSDSFTRWVIDEIEASIDVKRRTIETQAPMIVAIAERVVETFRRGGKLLLCGNGGSAADAQHIAAEFVSRFRRERHGLPAIALTTDTSILTAISNDYGYERVFARQVEALGRPGDMVIGISTSGISASVIAAMRAARNGGMATVGFTGASGGTLVDHVDLCLCVPSHNTARIQEVHITVAHVVCEIVERTLFEE.

The 157-residue stretch at Val41–Glu197 folds into the SIS domain. Substrate is bound at residue Asn56 to Gly58. Zn(2+) contacts are provided by His65 and Glu69. Residues Glu69, Asn98–Asp99, Ser124–Ser126, Ser129, and Gln176 each bind substrate. 2 residues coordinate Zn(2+): Gln176 and His184.

The protein belongs to the SIS family. GmhA subfamily. Requires Zn(2+) as cofactor.

It localises to the cytoplasm. It catalyses the reaction 2 D-sedoheptulose 7-phosphate = D-glycero-alpha-D-manno-heptose 7-phosphate + D-glycero-beta-D-manno-heptose 7-phosphate. It participates in carbohydrate biosynthesis; D-glycero-D-manno-heptose 7-phosphate biosynthesis; D-glycero-alpha-D-manno-heptose 7-phosphate and D-glycero-beta-D-manno-heptose 7-phosphate from sedoheptulose 7-phosphate: step 1/1. Its function is as follows. Catalyzes the isomerization of sedoheptulose 7-phosphate in D-glycero-D-manno-heptose 7-phosphate. This chain is Phosphoheptose isomerase, found in Roseiflexus sp. (strain RS-1).